Reading from the N-terminus, the 1098-residue chain is Protein translocase subunit SecA (1098 aa).

ATP contacts are provided by residues glutamine 176, 194-198, and aspartate 696; that span reads GEGKT. The disordered stretch occupies residues 1024 to 1098; that stretch reads EPEQVREAAP…KYKNCHGQNA (75 aa). 2 stretches are compositionally biased toward basic and acidic residues: residues 1041–1051 and 1058–1077; these read QYREEKQDLSD and AEHDTREVKREPVRAEKTVG. The Zn(2+) site is built by cysteine 1082, cysteine 1084, cysteine 1093, and histidine 1094.

This sequence belongs to the SecA family. In terms of assembly, monomer and homodimer. Part of the essential Sec protein translocation apparatus which comprises SecA, SecYEG and auxiliary proteins SecDF. Other proteins may also be involved. The cofactor is Zn(2+).

Its subcellular location is the cell inner membrane. The protein localises to the cytoplasm. The catalysed reaction is ATP + H2O + cellular proteinSide 1 = ADP + phosphate + cellular proteinSide 2.. Functionally, part of the Sec protein translocase complex. Interacts with the SecYEG preprotein conducting channel. Has a central role in coupling the hydrolysis of ATP to the transfer of proteins into and across the cell membrane, serving as an ATP-driven molecular motor driving the stepwise translocation of polypeptide chains across the membrane. This is Protein translocase subunit SecA from Phocaeicola vulgatus (strain ATCC 8482 / DSM 1447 / JCM 5826 / CCUG 4940 / NBRC 14291 / NCTC 11154) (Bacteroides vulgatus).